The primary structure comprises 419 residues: Hyaluronan synthase (419 aa).

Helical transmembrane passes span 8 to 28, 33 to 53, 318 to 338, 345 to 365, and 376 to 396; these read LIVL…MYLF, VGIY…LSFL, IVAL…VAIG, AIQL…IVAL, and PASF…LQPL.

It belongs to the NodC/HAS family. Mg(2+) is required as a cofactor.

Its subcellular location is the cell membrane. It carries out the reaction [hyaluronan](n) + UDP-N-acetyl-alpha-D-glucosamine = N-acetyl-beta-D-glucosaminyl-(1-&gt;4)-[hyaluronan](n) + UDP + H(+). The enzyme catalyses N-acetyl-beta-D-glucosaminyl-(1-&gt;4)-[hyaluronan](n) + UDP-alpha-D-glucuronate = [hyaluronan](n+1) + UDP + H(+). It functions in the pathway glycan biosynthesis; hyaluronan biosynthesis. Its function is as follows. Glycosaminoglycan synthesis. The hyaluronic acid capsule is involved in the pathogenicity of group A Streptococci; it may be the major virulence determinant. The chain is Hyaluronan synthase (hasA) from Streptococcus pyogenes serotype M6 (strain ATCC BAA-946 / MGAS10394).